A 136-amino-acid polypeptide reads, in one-letter code: WAP four-disulfide core domain protein 6A (136 aa).

The N-terminal stretch at 1 to 27 (MRLWGLLPFLVPFILLWSIQEPELAEG) is a signal peptide. The WAP domain occupies 28-73 (FFIRTCPRVRVKCEVEERNECTRHRQCPNKKRCCLFSCGKKCMDLR). 7 disulfide bridges follow: Cys-33–Cys-61, Cys-40–Cys-65, Cys-48–Cys-60, Cys-54–Cys-69, Cys-77–Cys-127, Cys-86–Cys-110, and Cys-102–Cys-123. Positions 77-127 (CSLPQDPGPCLAYLPRWWYNQETDLCTEFIYGGCQGNPNNFPSEGICTVVC) constitute a BPTI/Kunitz inhibitor domain.

The protein resides in the secreted. This is WAP four-disulfide core domain protein 6A (Wfdc6a) from Mus musculus (Mouse).